Consider the following 385-residue polypeptide: Probable peptidoglycan glycosyltransferase FtsW (385 aa).

9 helical membrane passes run 18–38 (LLWTAILLALAGLVMVSSASL), 57–77 (IYLALGLGVGAFVYYAVPLAL), 81–101 (LRFVMLPVALVALVMVFIPGL), 111–131 (WIALPGLTIQASEIVKLCFVL), 157–177 (LLGVLMLLLLLEPDFGAVVVL), 195–215 (FLLIGLIAVALGGLVAFAEPY), 280–300 (LGLLGNVALIGGFILLGWRVF), 311–331 (LLYHAYLVYGCAFVFCSQAFI), and 347–367 (LPFISYGGSSLLISAVMVGLI).

Belongs to the SEDS family. FtsW subfamily.

The protein resides in the cell inner membrane. The catalysed reaction is [GlcNAc-(1-&gt;4)-Mur2Ac(oyl-L-Ala-gamma-D-Glu-L-Lys-D-Ala-D-Ala)](n)-di-trans,octa-cis-undecaprenyl diphosphate + beta-D-GlcNAc-(1-&gt;4)-Mur2Ac(oyl-L-Ala-gamma-D-Glu-L-Lys-D-Ala-D-Ala)-di-trans,octa-cis-undecaprenyl diphosphate = [GlcNAc-(1-&gt;4)-Mur2Ac(oyl-L-Ala-gamma-D-Glu-L-Lys-D-Ala-D-Ala)](n+1)-di-trans,octa-cis-undecaprenyl diphosphate + di-trans,octa-cis-undecaprenyl diphosphate + H(+). The protein operates within cell wall biogenesis; peptidoglycan biosynthesis. Its function is as follows. Peptidoglycan polymerase that is essential for cell division. The chain is Probable peptidoglycan glycosyltransferase FtsW from Alcanivorax borkumensis (strain ATCC 700651 / DSM 11573 / NCIMB 13689 / SK2).